Here is an 89-residue protein sequence, read N- to C-terminus: MALTTENKAAIVADYAQSKGDTGSPEVQVALLTARINDLTPHFKEHSKDHHSRRGLLHLVSQRRKLLDYLKGKNVERYRTLITRLGLRK.

It belongs to the universal ribosomal protein uS15 family. As to quaternary structure, part of the 30S ribosomal subunit. Forms a bridge to the 50S subunit in the 70S ribosome, contacting the 23S rRNA.

Its function is as follows. One of the primary rRNA binding proteins, it binds directly to 16S rRNA where it helps nucleate assembly of the platform of the 30S subunit by binding and bridging several RNA helices of the 16S rRNA. Functionally, forms an intersubunit bridge (bridge B4) with the 23S rRNA of the 50S subunit in the ribosome. This Dechloromonas aromatica (strain RCB) protein is Small ribosomal subunit protein uS15.